We begin with the raw amino-acid sequence, 283 residues long: Lipoyl synthase (283 aa).

[4Fe-4S] cluster-binding residues include Cys-35, Cys-40, Cys-46, Cys-61, Cys-65, Cys-68, and Ser-273. Positions 47–262 (FRSRQATFLI…RERALAMGFK (216 aa)) constitute a Radical SAM core domain.

The protein belongs to the radical SAM superfamily. Lipoyl synthase family. The cofactor is [4Fe-4S] cluster.

The protein resides in the cytoplasm. The catalysed reaction is [[Fe-S] cluster scaffold protein carrying a second [4Fe-4S](2+) cluster] + N(6)-octanoyl-L-lysyl-[protein] + 2 oxidized [2Fe-2S]-[ferredoxin] + 2 S-adenosyl-L-methionine + 4 H(+) = [[Fe-S] cluster scaffold protein] + N(6)-[(R)-dihydrolipoyl]-L-lysyl-[protein] + 4 Fe(3+) + 2 hydrogen sulfide + 2 5'-deoxyadenosine + 2 L-methionine + 2 reduced [2Fe-2S]-[ferredoxin]. The protein operates within protein modification; protein lipoylation via endogenous pathway; protein N(6)-(lipoyl)lysine from octanoyl-[acyl-carrier-protein]: step 2/2. Catalyzes the radical-mediated insertion of two sulfur atoms into the C-6 and C-8 positions of the octanoyl moiety bound to the lipoyl domains of lipoate-dependent enzymes, thereby converting the octanoylated domains into lipoylated derivatives. The protein is Lipoyl synthase of Geotalea uraniireducens (strain Rf4) (Geobacter uraniireducens).